The following is a 232-amino-acid chain: Ribosomal RNA small subunit methyltransferase G (232 aa).

S-adenosyl-L-methionine contacts are provided by residues glycine 93, leucine 98, 144–145 (VE), and arginine 163.

The protein belongs to the methyltransferase superfamily. RNA methyltransferase RsmG family.

It is found in the cytoplasm. The catalysed reaction is guanosine(527) in 16S rRNA + S-adenosyl-L-methionine = N(7)-methylguanosine(527) in 16S rRNA + S-adenosyl-L-homocysteine. Its function is as follows. Specifically methylates the N7 position of guanine in position 527 of 16S rRNA. This chain is Ribosomal RNA small subunit methyltransferase G, found in Burkholderia pseudomallei (strain 1106a).